The primary structure comprises 346 residues: GTPase Obg (346 aa).

The 159-residue stretch at 1-159 (MKFLDEAKVY…RWIWLRLKLI (159 aa)) folds into the Obg domain. One can recognise an OBG-type G domain in the interval 160 to 327 (ADAGLVGLPN…ALRALVAVIG (168 aa)). Residues 166–173 (GLPNAGKS), 191–195 (FTTLH), 212–215 (DIPG), 279–282 (NKID), and 308–310 (SAA) contribute to the GTP site. Mg(2+) contacts are provided by serine 173 and threonine 193.

Belongs to the TRAFAC class OBG-HflX-like GTPase superfamily. OBG GTPase family. In terms of assembly, monomer. It depends on Mg(2+) as a cofactor.

The protein localises to the cytoplasm. An essential GTPase which binds GTP, GDP and possibly (p)ppGpp with moderate affinity, with high nucleotide exchange rates and a fairly low GTP hydrolysis rate. Plays a role in control of the cell cycle, stress response, ribosome biogenesis and in those bacteria that undergo differentiation, in morphogenesis control. The sequence is that of GTPase Obg from Bradyrhizobium diazoefficiens (strain JCM 10833 / BCRC 13528 / IAM 13628 / NBRC 14792 / USDA 110).